Consider the following 570-residue polypeptide: Putative ABC transporter ATP-binding protein SAV2684 (570 aa).

2 ABC transporter domains span residues 6 to 247 (ISFK…GIRE) and 304 to 537 (LELN…ASLR). ATP-binding positions include 40–47 (GASGSGKS) and 338–345 (GHNGAGKS).

The protein belongs to the ABC transporter superfamily.

The protein resides in the cell membrane. Probably part of an ABC transporter complex. Responsible for energy coupling to the transport system. This is Putative ABC transporter ATP-binding protein SAV2684 from Staphylococcus aureus (strain Mu50 / ATCC 700699).